The primary structure comprises 100 residues: uncharacterized protein (100 aa).

This is an uncharacterized protein from Acanthamoeba polyphaga mimivirus (APMV).